The chain runs to 237 residues: tRNA (guanine-N(1)-)-methyltransferase (237 aa).

S-adenosyl-L-methionine-binding positions include glycine 115 and 134–139 (LGDFVL).

This sequence belongs to the RNA methyltransferase TrmD family. In terms of assembly, homodimer.

The protein localises to the cytoplasm. The enzyme catalyses guanosine(37) in tRNA + S-adenosyl-L-methionine = N(1)-methylguanosine(37) in tRNA + S-adenosyl-L-homocysteine + H(+). Functionally, specifically methylates guanosine-37 in various tRNAs. This chain is tRNA (guanine-N(1)-)-methyltransferase, found in Synechococcus sp. (strain RCC307).